Here is a 29-residue protein sequence, read N- to C-terminus: Cyclotide vibi-D (29 aa).

Residues 1–29 (GLPVCGETCFGGRCNTPGCTCSYPICTRN) constitute a cross-link (cyclopeptide (Gly-Asn)). Disulfide bonds link Cys5–Cys19, Cys9–Cys21, and Cys14–Cys26.

In terms of processing, this is a cyclic peptide.

Functionally, probably participates in a plant defense mechanism. Has moderate levels of cytotoxic activity, active against a human lymphoma cell line with an IC(50) of &gt;30 uM. In Viola biflora (Yellow wood violet), this protein is Cyclotide vibi-D.